Reading from the N-terminus, the 425-residue chain is MLDLKKLRSNTEEVKKALSNRGEDFDVNVIDEVIALDEERRKILVDVEALKKQRNEVSAEIPKRKKAGEDVTEVMAEMREIGDKIKADDAKVAELNDKINYIMLRIPNIPNPAVPEGETDEDNVEIKRWGEPTKFNFEPKAHWDLGTDLDLLDFERGGKIAGSRFTVYKGMGARLERSIINYFLDKHTFENGYTEVLPPYMVNRDSMTGTGQLPKFEEDAFKVENNGYFLIPTAEVPVTNMYRNETLEGDKLPIKHAAYSACFRAEAGSAGRDTRGLIRQHQFNKVELVKFCKPEQSYEELDKLVQDAESVLQGLGLPYRIVRICKGDLGFTAALKYDIEVWMPSYNRYVEISSCSNFEDFQARRANIKYKNSPKEKPQFVHTLNGSGVAIGRTVAAILENYQQEDGSVVIPEALKEYMRCDLLK.

Position 233-235 (233-235 (TAE)) interacts with L-serine. Residue 264–266 (RAE) participates in ATP binding. Glutamate 287 contributes to the L-serine binding site. 351–354 (EISS) contributes to the ATP binding site. Position 387 (serine 387) interacts with L-serine.

This sequence belongs to the class-II aminoacyl-tRNA synthetase family. Type-1 seryl-tRNA synthetase subfamily. In terms of assembly, homodimer. The tRNA molecule binds across the dimer.

Its subcellular location is the cytoplasm. It catalyses the reaction tRNA(Ser) + L-serine + ATP = L-seryl-tRNA(Ser) + AMP + diphosphate + H(+). It carries out the reaction tRNA(Sec) + L-serine + ATP = L-seryl-tRNA(Sec) + AMP + diphosphate + H(+). It participates in aminoacyl-tRNA biosynthesis; selenocysteinyl-tRNA(Sec) biosynthesis; L-seryl-tRNA(Sec) from L-serine and tRNA(Sec): step 1/1. Its function is as follows. Catalyzes the attachment of serine to tRNA(Ser). Is also able to aminoacylate tRNA(Sec) with serine, to form the misacylated tRNA L-seryl-tRNA(Sec), which will be further converted into selenocysteinyl-tRNA(Sec). This is Serine--tRNA ligase from Clostridium perfringens (strain SM101 / Type A).